We begin with the raw amino-acid sequence, 183 residues long: MQINREAILADWEAHPMRKPRIAKVTINIGVGESGERLTKAETMLEQLVGQKPIRRRAKQTNRDFGIRRGEPIAVKVTLRGEKAYQMLDRLLEAVDRKLKASNFDEHGNFCFGIQEHINIPGVEYDPEIGIFGMDVCVTLERPGFRVAKRKRQRRKIPTKHKLTKEEGIVFAMEELKAKVEGL.

It belongs to the universal ribosomal protein uL5 family. As to quaternary structure, part of the 50S ribosomal subunit; contacts the 5S rRNA and probably tRNA. Forms a bridge to the 30S subunit in the 70S ribosome.

In terms of biological role, this is one of the proteins that bind and probably mediate the attachment of the 5S RNA into the large ribosomal subunit, where it forms part of the central protuberance. In the 70S ribosome it contacts protein S13 of the 30S subunit (bridge B1b), connecting the 2 subunits; this bridge is implicated in subunit movement. May contact the P site tRNA; the 5S rRNA and some of its associated proteins might help stabilize positioning of ribosome-bound tRNAs. This chain is Large ribosomal subunit protein uL5, found in Thermococcus kodakarensis (strain ATCC BAA-918 / JCM 12380 / KOD1) (Pyrococcus kodakaraensis (strain KOD1)).